A 494-amino-acid chain; its full sequence is Lysine--tRNA ligase (494 aa).

Residues Glu-407 and Glu-414 each coordinate Mg(2+).

The protein belongs to the class-II aminoacyl-tRNA synthetase family. Homodimer. Mg(2+) is required as a cofactor.

Its subcellular location is the cytoplasm. The enzyme catalyses tRNA(Lys) + L-lysine + ATP = L-lysyl-tRNA(Lys) + AMP + diphosphate. This chain is Lysine--tRNA ligase, found in Lactococcus lactis subsp. cremoris (strain SK11).